The chain runs to 395 residues: Inner membrane protein YjgN (395 aa).

The Cytoplasmic segment spans residues 1–24 (MNNVISSKDNHNHTLVFTGKGGKY). The helical transmembrane segment at 25–45 (FVICLVNFLLTCITLGIYAPW) threads the bilayer. Residues 46–71 (AMVKCRRYIYTNMTLNNQPFAYKATG) are Periplasmic-facing. The helical transmembrane segment at 72–92 (GALFISVLLVFIIYIVSLSLI) threads the bilayer. The Cytoplasmic portion of the chain corresponds to 93 to 95 (EHG). The helical transmembrane segment at 96-116 (HPGLGFTLFGLLIAIIPFMAV) threads the bilayer. Residues 117-146 (KGLQYQAMMTSLNGVHFGFQCSMRRAWWYM) lie on the Periplasmic side of the membrane. Residues 147–167 (FALPVLLMVALYIVLYIISLV) form a helical membrane-spanning segment. A topological domain (cytoplasmic) is located at residue threonine 168. The chain crosses the membrane as a helical span at residues 169-189 (IAVGGLVFSIVFLGLLAIIGI). Residues 190–229 (GVINGITYSKWMTLFGNGANFGIHRFSIQVNVKTCIRGCV) are Periplasmic-facing. The helical transmembrane segment at 230–250 (LAMLTLFPFAVVIGYLIAPVF) threads the bilayer. Over 251 to 275 (TDMILLSMMGNAQAGGALILQYYGQ) the chain is Cytoplasmic. A helical transmembrane segment spans residues 276–296 (IMACYFLYFLAIIVVTSYLYV). At 297 to 327 (ALRNLFLNNLSLANDSIRFHSSVTAHGMLWR) the chain is on the periplasmic side. Residues 328–348 (LLVVFVISGVTLGLAYPWLKI) traverse the membrane as a helical segment. The Cytoplasmic segment spans residues 349-395 (WLVSWLAQNTQVQGDLDSLELTNDEKPLENSPLMWISRGIMPYFPFI).

It is found in the cell inner membrane. This chain is Inner membrane protein YjgN (yjgN), found in Salmonella typhimurium (strain LT2 / SGSC1412 / ATCC 700720).